We begin with the raw amino-acid sequence, 337 residues long: Fructose-1,6-bisphosphatase class 1 (337 aa).

Residues glutamate 94, aspartate 116, leucine 118, and aspartate 119 each coordinate Mg(2+). Substrate-binding positions include 119-122, asparagine 210, and lysine 276; that span reads DGSS. Glutamate 282 is a Mg(2+) binding site.

The protein belongs to the FBPase class 1 family. As to quaternary structure, homotetramer. It depends on Mg(2+) as a cofactor.

It is found in the cytoplasm. It catalyses the reaction beta-D-fructose 1,6-bisphosphate + H2O = beta-D-fructose 6-phosphate + phosphate. It functions in the pathway carbohydrate biosynthesis; gluconeogenesis. The chain is Fructose-1,6-bisphosphatase class 1 from Burkholderia lata (strain ATCC 17760 / DSM 23089 / LMG 22485 / NCIMB 9086 / R18194 / 383).